The following is a 153-amino-acid chain: Arachidonate 5-lipoxygenase-activating protein (153 aa).

Residues 1-8 lie on the Lumenal side of the membrane; it reads MDQETVGN. The helical transmembrane segment at 9–30 threads the bilayer; it reads IVLLAIVTLISVVQNGFFAHKV. Over 31-52 the chain is Cytoplasmic; the sequence is EHESKTHNGRSFQRTGPLAFER. The helical transmembrane segment at 53–77 threads the bilayer; the sequence is VYTANQNCVDAYPTFLVMLWSAGLL. The Lumenal portion of the chain corresponds to 78 to 80; that stretch reads CSQ. A helical membrane pass occupies residues 81 to 102; that stretch reads VPAAFAGLMYLFVRQKYFVGYL. At 103 to 107 the chain is on the cytoplasmic side; it reads GERTQ. Residues 108–115 lie within the membrane without spanning it; sequence STPGYIFG. Residues 116–128 traverse the membrane as a helical segment; it reads KRIILFLFAMSLA. At 129 to 153 the chain is on the lumenal side; sequence GILNYFLIAFFGSDFENYIKTVTTT.

This sequence belongs to the MAPEG family. Homotrimer. Interacts with LTC4S and ALOX5.

It localises to the nucleus membrane. It is found in the endoplasmic reticulum membrane. Required for leukotriene biosynthesis by ALOX5 (5-lipoxygenase). Anchors ALOX5 to the membrane. Binds arachidonic acid, and could play an essential role in the transfer of arachidonic acid to ALOX5. Binds to MK-886, a compound that blocks the biosynthesis of leukotrienes. The sequence is that of Arachidonate 5-lipoxygenase-activating protein (ALOX5AP) from Ovis aries (Sheep).